The primary structure comprises 545 residues: Carboxypeptidase Y homolog A (545 aa).

Positions 1-17 (MKSLALALLVGGAIAAG) are cleaved as a signal peptide. Positions 18–123 (PQQQVLQAPV…KLEAYDLRVK (106 aa)) are excised as a propeptide. Cystine bridges form between cysteine 177–cysteine 416, cysteine 311–cysteine 325, cysteine 335–cysteine 358, cysteine 342–cysteine 351, and cysteine 380–cysteine 386. Asparagine 208 carries an N-linked (GlcNAc...) asparagine glycan. Serine 264 is a catalytic residue. The active site involves aspartate 455. N-linked (GlcNAc...) asparagine glycosylation is found at asparagine 485, asparagine 491, and asparagine 506. The active site involves histidine 517.

Belongs to the peptidase S10 family.

It localises to the vacuole. The catalysed reaction is Release of a C-terminal amino acid with broad specificity.. Vacuolar carboxypeptidase involved in degradation of small peptides. Digests preferentially peptides containing an aliphatic or hydrophobic residue in P1' position, as well as methionine, leucine or phenylalanine in P1 position of ester substrate. The sequence is that of Carboxypeptidase Y homolog A (CPYA) from Ajellomyces dermatitidis (strain ER-3 / ATCC MYA-2586) (Blastomyces dermatitidis).